Here is a 1334-residue protein sequence, read N- to C-terminus: Aldehyde oxidase 4 (1334 aa).

Residues 6–93 (DELIFFVNGK…GAAVTTVEGV (88 aa)) enclose the 2Fe-2S ferredoxin-type domain. Residues Cys-45, Cys-50, Cys-53, and Cys-75 each contribute to the [2Fe-2S] cluster site. Gln-114 is a Mo-molybdopterin binding site. [2Fe-2S] cluster is bound by residues Cys-115, Cys-118, Cys-150, and Cys-152. Cys-152 provides a ligand contact to Mo-molybdopterin. An FAD-binding PCMH-type domain is found at 235-421 (FQGERTIWIM…LSVFIPYSGQ (187 aa)). Residues 263–270 (LVMGNTAV), Ala-345, Thr-354, His-358, Asp-367, and Ala-411 contribute to the FAD site. Mo-molybdopterin contacts are provided by residues Ala-802, 802 to 803 (AF), Leu-1043, 1084 to 1087 (GSMG), Gln-1199, and Leu-1263. Glu-1265 (proton acceptor; for azaheterocycle hydroxylase activity) is an active-site residue.

It belongs to the xanthine dehydrogenase family. As to quaternary structure, homodimer. [2Fe-2S] cluster is required as a cofactor. FAD serves as cofactor. The cofactor is Mo-molybdopterin.

Its subcellular location is the cytoplasm. The catalysed reaction is an aldehyde + O2 + H2O = a carboxylate + H2O2 + H(+). It catalyses the reaction retinal + O2 + H2O = retinoate + H2O2 + H(+). Aldehyde oxidase able to catalyze the oxidation of retinaldehyde into retinoate. Acts as a negative modulator of the epidermal trophism. May be able to oxidize a wide variety of aldehydes into their corresponding carboxylates and to hydroxylate azaheterocycles. The sequence is that of Aldehyde oxidase 4 (Aox4) from Rattus norvegicus (Rat).